A 96-amino-acid polypeptide reads, in one-letter code: Protein Vpr (96 aa).

The tract at residues 1-42 (MEQAPGDQGPQREPYNEWALEILEELKNEAVRHFPRPWLHGL) is homooligomerization. A phosphoserine; by host mark is found at Ser-79, Ser-94, and Ser-96.

It belongs to the HIV-1 VPR protein family. Homooligomer, may form homodimer. Interacts with p6-gag region of the Pr55 Gag precursor protein through a (Leu-X-X)4 motif near the C-terminus of the P6gag protein. Interacts with host UNG. May interact with host RAD23A/HHR23A. Interacts with host VPRBP/DCAF1, leading to hijack the CUL4A-RBX1-DDB1-DCAF1/VPRBP complex, mediating ubiquitination of host proteins such as TERT and ZGPAT and arrest of the cell cycle in G2 phase. Phosphorylated on several residues by host. These phosphorylations regulate VPR activity for the nuclear import of the HIV-1 pre-integration complex.

The protein resides in the virion. The protein localises to the host nucleus. It localises to the host extracellular space. Functionally, during virus replication, may deplete host UNG protein, and incude G2-M cell cycle arrest. Acts by targeting specific host proteins for degradation by the 26S proteasome, through association with the cellular CUL4A-DDB1 E3 ligase complex by direct interaction with host VPRPB/DCAF-1. Cell cycle arrest reportedly occurs within hours of infection and is not blocked by antiviral agents, suggesting that it is initiated by the VPR carried into the virion. Additionally, VPR induces apoptosis in a cell cycle dependent manner suggesting that these two effects are mechanistically linked. Detected in the serum and cerebrospinal fluid of AIDS patient, VPR may also induce cell death to bystander cells. During virus entry, plays a role in the transport of the viral pre-integration (PIC) complex to the host nucleus. This function is crucial for viral infection of non-dividing macrophages. May act directly at the nuclear pore complex, by binding nucleoporins phenylalanine-glycine (FG)-repeat regions. This is Protein Vpr from Human immunodeficiency virus type 1 group M subtype F1 (isolate VI850) (HIV-1).